The primary structure comprises 210 residues: Large ribosomal subunit protein bL25 (210 aa).

It belongs to the bacterial ribosomal protein bL25 family. CTC subfamily. Part of the 50S ribosomal subunit; part of the 5S rRNA/L5/L18/L25 subcomplex. Contacts the 5S rRNA. Binds to the 5S rRNA independently of L5 and L18.

Its function is as follows. This is one of the proteins that binds to the 5S RNA in the ribosome where it forms part of the central protuberance. This Herminiimonas arsenicoxydans protein is Large ribosomal subunit protein bL25.